The following is a 438-amino-acid chain: Enolase (438 aa).

Substrate contacts are provided by His-159 and Glu-168. Glu-211 serves as the catalytic Proton donor. The Mg(2+) site is built by Asp-246, Glu-297, and Asp-322. Positions 297 and 322 each coordinate substrate. The Proton acceptor role is filled by Lys-347. Residues 374 to 377 and Lys-398 contribute to the substrate site; that span reads SHRS.

Belongs to the enolase family. Homodimer. Requires Mg(2+) as cofactor.

The protein localises to the cytoplasm. It catalyses the reaction (2R)-2-phosphoglycerate = phosphoenolpyruvate + H2O. It participates in carbohydrate degradation; glycolysis; pyruvate from D-glyceraldehyde 3-phosphate: step 4/5. In Aspergillus fumigatus (strain ATCC MYA-4609 / CBS 101355 / FGSC A1100 / Af293) (Neosartorya fumigata), this protein is Enolase (enoA).